The following is a 165-amino-acid chain: Pyruvoyl-dependent arginine decarboxylase (165 aa).

Ser53 bears the Pyruvic acid (Ser) mark.

It belongs to the PdaD family. In terms of assembly, trimer of an alpha-beta dimer. It depends on pyruvate as a cofactor.

The enzyme catalyses L-arginine + H(+) = agmatine + CO2. The protein is Pyruvoyl-dependent arginine decarboxylase (pdaD) of Methanocaldococcus jannaschii (strain ATCC 43067 / DSM 2661 / JAL-1 / JCM 10045 / NBRC 100440) (Methanococcus jannaschii).